The primary structure comprises 60 residues: Cytotoxin 7 (60 aa).

4 cysteine pairs are disulfide-bonded: cysteine 3/cysteine 21, cysteine 14/cysteine 38, cysteine 42/cysteine 53, and cysteine 54/cysteine 59.

This sequence belongs to the three-finger toxin family. Short-chain subfamily. Type IA cytotoxin sub-subfamily. In terms of assembly, monomer in solution; Homodimer and oligomer in the presence of negatively charged lipids forming a pore with a size ranging between 20 and 30 Angstroms. Expressed by the venom gland.

It is found in the secreted. The protein localises to the target cell membrane. Functionally, shows cytolytic activity on many different cells by forming pore in lipid membranes. In vivo, increases heart rate or kills the animal by cardiac arrest. In addition, it binds to heparin with high affinity, interacts with Kv channel-interacting protein 1 (KCNIP1) in a calcium-independent manner, and binds to integrin alpha-V/beta-3 (ITGAV/ITGB3) with moderate affinity. The chain is Cytotoxin 7 from Naja annulifera (Banded Egyptian cobra).